A 585-amino-acid polypeptide reads, in one-letter code: Optineurin (585 aa).

Positions 1–32 are disordered; it reads MSHQPLSCLTEKGDSSCETPGNGPSNMVHPNL. Positions 16-25 are enriched in polar residues; that stretch reads SCETPGNGPS. A coiled-coil region spans residues 38–181; sequence EELLQQMKEL…VSELQLKLNS (144 aa). The segment at 58 to 220 is interaction with Rab8; that stretch reads MKLNNQAMKG…GPTRTDSISM (163 aa). The LIR signature appears at 187–192; the sequence is DSFVEI. 2 positions are modified to phosphoserine: serine 188 and serine 209. 2 disordered regions span residues 200-220 and 269-299; these read EGAMKEMRNSAGPTRTDSISM and FEKKANGHSAIETQTEGSTQKEEEDKDPESV. Residues 244 to 512 are a coiled coil; sequence CLREGNQKVE…LLKENNDFED (269 aa). A Phosphoserine modification is found at serine 346. Positions 415 to 585 are interaction with HD; the sequence is TKQQAEKVDK…LQIHVMDCII (171 aa). Residues 416–525 are interaction with MYO6; that stretch reads KQQAEKVDKV…RQSLMEMQCR (110 aa). A UBAN motif is present at residues 478–483; that stretch reads DFHAER. Position 531 is a phosphoserine (serine 531). The CCHC NOA-type zinc finger occupies 555-585; sequence PRSIPIHSCPKCGEVLPDIDTLQIHVMDCII. Zn(2+) contacts are provided by cysteine 563, cysteine 566, histidine 579, and cysteine 583.

As to quaternary structure, self-associates. Interacts with HD. Interacts with GTF3A. Interacts with MYO6. Interacts (via UBAN) with ubiquitinated TFRC. Interacts with GTP-bound Rab8 (RAB8A and/or RAB8B). Interacts with TBC1D17. Interacts with TBK1. Interacts with TRAF3. Binds to linear ubiquitin chains. Interacts with LC3 family members MAP1LC3A, MAP1LC3B, GABARAP, GABARAPL1 and GABARAPL2; OPTN phosphorylation increases the association (at least with MAP1LC3B). Interacts with RAB12; the interaction may be indirect. Interacts with TBK1; this interaction leads to the Golgi localization of TBK1 and its subsequent activation. Interacts with palmitoyltransferase ZDHHC17/HIP14; the interaction does not lead to palmitoylation of OPTN. Interacts with CYLD. Interacts with TOM1; the interaction is indirect and is mediated by MYO6, which acts as a bridge between TOM1 and OPTN. Interacts with USP12; the interaction is independent of USP12 deubiquitinase activity and may be involved in regulation of autophagic flux. Phosphorylated by TBK1, leading to restrict bacterial proliferation in case of infection.

It localises to the cytoplasm. It is found in the perinuclear region. The protein localises to the golgi apparatus. The protein resides in the trans-Golgi network. Its subcellular location is the cytoplasmic vesicle. It localises to the autophagosome. It is found in the recycling endosome. Plays an important role in the maintenance of the Golgi complex, in membrane trafficking, in exocytosis, through its interaction with myosin VI and Rab8. Links myosin VI to the Golgi complex and plays an important role in Golgi ribbon formation. Negatively regulates the induction of IFNB in response to RNA virus infection. Plays a neuroprotective role in the eye and optic nerve. Probably part of the TNF-alpha signaling pathway that can shift the equilibrium toward induction of cell death. May act by regulating membrane trafficking and cellular morphogenesis via a complex that contains Rab8 and huntingtin (HD). Mediates the interaction of Rab8 with the probable GTPase-activating protein TBC1D17 during Rab8-mediated endocytic trafficking, such as that of transferrin receptor (TFRC/TfR); regulates Rab8 recruitment to tubules emanating from the endocytic recycling compartment. Autophagy receptor that interacts directly with both the cargo to become degraded and an autophagy modifier of the MAP1 LC3 family; targets ubiquitin-coated bacteria (xenophagy) and appears to function in the same pathway as SQSTM1 and CALCOCO2/NDP52. This is Optineurin (Optn) from Rattus norvegicus (Rat).